A 183-amino-acid chain; its full sequence is Phospholipase A2 inhibitor gamma subunit A1 (183 aa).

Intrachain disulfides connect Cys-3–Cys-28, Cys-6–Cys-13, Cys-21–Cys-49, Cys-55–Cys-76, Cys-77–Cys-82, Cys-100–Cys-125, Cys-118–Cys-147, and Cys-151–Cys-173. Residue Asn-158 is glycosylated (N-linked (GlcNAc...) asparagine).

Belongs to the CNF-like-inhibitor family. In terms of assembly, heterodimer of subunit A and subunit B. As to expression, expressed by the liver.

It is found in the secreted. In terms of biological role, phospholipase A2 (PA2) inhibitor. Inhibits the enzymatic activity of PA2 of Deinagkistrodon acutus. Also shows a wide anti-hemorrhage activities to D.acutus, Naja atra and Agkistrodon halys venom. The native protein is more potent than the recombinant one. The sequence is that of Phospholipase A2 inhibitor gamma subunit A1 from Trimerodytes annularis (Red-bellied annulate keelback).